Reading from the N-terminus, the 280-residue chain is Homeobox protein Hox-B1b (280 aa).

The interval 46–65 is disordered; sequence GRLAAPTSAPHQSPGLPLHH. Positions 170 to 175 match the Antp-type hexapeptide motif; that stretch reads TFDWMK. The homeobox DNA-binding region spans 195–254; it reads HNVIRTNFTTKQLTELEKEFHFNKYLTRARRVEVAASLELNETQVKIWFQNRRMKQKKRE. The tract at residues 249 to 280 is disordered; the sequence is KQKKREKLGGVLVHREKASGPESSPKAKESEP. Residues 261–280 are compositionally biased toward basic and acidic residues; sequence VHREKASGPESSPKAKESEP.

Belongs to the Antp homeobox family. Labial subfamily.

The protein resides in the nucleus. In terms of biological role, sequence-specific transcription factor which is part of a developmental regulatory system that provides cells with specific positional identities on the anterior-posterior axis. The protein is Homeobox protein Hox-B1b (hoxb1b) of Takifugu rubripes (Japanese pufferfish).